We begin with the raw amino-acid sequence, 317 residues long: tRNA dimethylallyltransferase (317 aa).

14–21 (GPTAVGKT) contacts ATP. Position 16-21 (16-21 (TAVGKT)) interacts with substrate. Positions 39-42 (DSMQ) are interaction with substrate tRNA.

This sequence belongs to the IPP transferase family. As to quaternary structure, monomer. The cofactor is Mg(2+).

The enzyme catalyses adenosine(37) in tRNA + dimethylallyl diphosphate = N(6)-dimethylallyladenosine(37) in tRNA + diphosphate. Catalyzes the transfer of a dimethylallyl group onto the adenine at position 37 in tRNAs that read codons beginning with uridine, leading to the formation of N6-(dimethylallyl)adenosine (i(6)A). The sequence is that of tRNA dimethylallyltransferase from Bacillus cereus (strain G9842).